A 420-amino-acid polypeptide reads, in one-letter code: Serine/threonine transporter SstT (420 aa).

Helical transmembrane passes span 14–34 (IMIG…WTFI), 40–60 (LFVG…IIAS), 71–91 (YVGS…VVAV), 172–192 (ITTV…GLVF), 210–230 (LLLL…AIVF), 283–303 (IPLG…IMTL), 309–329 (LGMS…AVSA), 332–352 (ASGI…LFGI), and 356–376 (IAMQ…SIET).

Belongs to the dicarboxylate/amino acid:cation symporter (DAACS) (TC 2.A.23) family.

The protein resides in the cell membrane. It carries out the reaction L-serine(in) + Na(+)(in) = L-serine(out) + Na(+)(out). It catalyses the reaction L-threonine(in) + Na(+)(in) = L-threonine(out) + Na(+)(out). In terms of biological role, involved in the import of serine and threonine into the cell, with the concomitant import of sodium (symport system). In Enterococcus faecalis (strain ATCC 700802 / V583), this protein is Serine/threonine transporter SstT.